The primary structure comprises 221 residues: MSQTCQTGYAYMQPFVQIIPSNLSLACGLRILRAEDYQSSLTTEELISAAKQDAEKILADAQEVYEQQKQLGWQAGMDEARTLQATLIHETQLQCQQFYRHVEQQMSEVVLLAVRKILNDYDQVAMTLQVVREALALVSNQKQVVVRVNPDQAGAIREQIAKVHKDFPEISYLEVTADARLDQGGCILETEVGIIDASIDGQIEALSRAISTTLGQMKVTE.

Belongs to the SctL stator family. In terms of assembly, the core secretion machinery of the T3SS is composed of approximately 20 different proteins, including cytoplasmic components, a base, an export apparatus and a needle. This subunit is part of the cytosolic complex. Interacts directly with YscN/SctN (T3SS ATPase) and YscQ/SctQ (the major sorting platform component).

The protein localises to the cytoplasm. In terms of biological role, component of the type III secretion system (T3SS), also called injectisome, which is used to inject bacterial effector proteins into eukaryotic host cells. Acts as a regulator of the YscN/SctN ATPase activity. This chain is Type 3 secretion system stator protein, found in Yersinia pestis.